We begin with the raw amino-acid sequence, 364 residues long: Selenide, water dikinase (364 aa).

U25 is a catalytic residue. Residue U25 is a non-standard amino acid, selenocysteine. ATP contacts are provided by residues K28, G46 to D48, D66, D89, and G141 to T143. Position 48 (D48) interacts with Mg(2+). Mg(2+) is bound at residue D89. A Mg(2+)-binding site is contributed by D244.

Belongs to the selenophosphate synthase 1 family. Class II subfamily. In terms of assembly, homodimer. Requires Mg(2+) as cofactor.

It carries out the reaction hydrogenselenide + ATP + H2O = selenophosphate + AMP + phosphate + 2 H(+). Its function is as follows. Synthesizes selenophosphate from selenide and ATP. This Dictyostelium discoideum (Social amoeba) protein is Selenide, water dikinase (selD).